Reading from the N-terminus, the 121-residue chain is Basic phospholipase A2 BmjeTX-I (121 aa).

7 disulfides stabilise this stretch: Cys26–Cys114, Cys28–Cys45, Cys44–Cys95, Cys50–Cys121, Cys51–Cys88, Cys58–Cys82, and Cys76–Cys86. Ca(2+) contacts are provided by Tyr27, Gly29, and Gly31. Residue His48 is part of the active site. Asp49 serves as a coordination point for Ca(2+). Asp89 is a catalytic residue.

Ca(2+) is required as a cofactor. Expressed by the venom gland.

The protein localises to the secreted. It carries out the reaction a 1,2-diacyl-sn-glycero-3-phosphocholine + H2O = a 1-acyl-sn-glycero-3-phosphocholine + a fatty acid + H(+). Functionally, snake venom phospholipase A2 (PLA2) that induces a slight blockade of neuromuscular contraction in an indirectly stimulated chick biventer cervicis nerve-muscle preparation. Does not inhibit contraction of chick biventer cervicic nerve-muscle preparation in response to treatment with acetylcholine or KCl. The neuromuscular blockade is mediated by inhibitory action at the presynaptic motor nerve endings. Lyses skeletal myoblasts and myotubes in vitro, and intramuscular injection causes local muscle necrosis. Induces edema in the mouse foot pad. Induces a transient increase of IL-6 levels. PLA2 catalyzes the calcium-dependent hydrolysis of the 2-acyl groups in 3-sn-phosphoglycerides. In Bothrops marajoensis (Marajo lancehead), this protein is Basic phospholipase A2 BmjeTX-I.